The chain runs to 328 residues: Protein MGF 300-4L (328 aa).

The protein belongs to the asfivirus MGF 300 family.

This is Protein MGF 300-4L from Ornithodoros (relapsing fever ticks).